A 107-amino-acid polypeptide reads, in one-letter code: Large ribosomal subunit protein uL24 (107 aa).

Belongs to the universal ribosomal protein uL24 family. In terms of assembly, part of the 50S ribosomal subunit.

One of two assembly initiator proteins, it binds directly to the 5'-end of the 23S rRNA, where it nucleates assembly of the 50S subunit. Functionally, one of the proteins that surrounds the polypeptide exit tunnel on the outside of the subunit. The polypeptide is Large ribosomal subunit protein uL24 (Thiobacillus denitrificans (strain ATCC 25259 / T1)).